A 255-amino-acid chain; its full sequence is ParA family protein TC_0871 (255 aa).

It belongs to the ParA family.

The protein is ParA family protein TC_0871 of Chlamydia muridarum (strain MoPn / Nigg).